Reading from the N-terminus, the 211-residue chain is HTH-type transcriptional repressor FabR (211 aa).

In terms of domain architecture, HTH tetR-type spans 10-70 (RTRRSLIEAA…TMVDESGLML (61 aa)). Residues 33–52 (SLREVSREAGIAPTSFYRHF) constitute a DNA-binding region (H-T-H motif).

Homodimer.

The protein resides in the cytoplasm. In terms of biological role, represses the transcription of fabB, involved in unsaturated fatty acid (UFA) biosynthesis. By controlling UFA production, FabR directly influences the physical properties of the membrane bilayer. The sequence is that of HTH-type transcriptional repressor FabR from Yersinia pseudotuberculosis serotype O:1b (strain IP 31758).